The chain runs to 374 residues: 3-dehydroquinate synthase (374 aa).

This sequence belongs to the archaeal-type DHQ synthase family.

It catalyses the reaction 2-amino-2,3,7-trideoxy-D-lyxo-hept-6-ulosonate + NAD(+) + H2O = 3-dehydroquinate + NH4(+) + NADH + H(+). Its function is as follows. Catalyzes the oxidative deamination and cyclization of 2-amino-3,7-dideoxy-D-threo-hept-6-ulosonic acid (ADH) to yield 3-dehydroquinate (DHQ), which is fed into the canonical shikimic pathway of aromatic amino acid biosynthesis. The sequence is that of 3-dehydroquinate synthase from Methanocella arvoryzae (strain DSM 22066 / NBRC 105507 / MRE50).